The primary structure comprises 496 residues: Probable malate:quinone oxidoreductase (496 aa).

Belongs to the MQO family. It depends on FAD as a cofactor.

The catalysed reaction is (S)-malate + a quinone = a quinol + oxaloacetate. It participates in carbohydrate metabolism; tricarboxylic acid cycle; oxaloacetate from (S)-malate (quinone route): step 1/1. The polypeptide is Probable malate:quinone oxidoreductase (Prochlorococcus marinus (strain MIT 9303)).